A 386-amino-acid polypeptide reads, in one-letter code: Succinate--CoA ligase [ADP-forming] subunit beta (386 aa).

Residues 9-244 form the ATP-grasp domain; sequence KEVLRKYGVV…LDEEDADEIE (236 aa). Residues lysine 46, 53–55, glutamate 99, alanine 102, and glutamate 107 contribute to the ATP site; that span reads GRG. Residues asparagine 199 and aspartate 213 each coordinate Mg(2+). Substrate contacts are provided by residues asparagine 264 and 321 to 323; that span reads GIM.

The protein belongs to the succinate/malate CoA ligase beta subunit family. As to quaternary structure, heterotetramer of two alpha and two beta subunits. The cofactor is Mg(2+).

It carries out the reaction succinate + ATP + CoA = succinyl-CoA + ADP + phosphate. The enzyme catalyses GTP + succinate + CoA = succinyl-CoA + GDP + phosphate. The protein operates within carbohydrate metabolism; tricarboxylic acid cycle; succinate from succinyl-CoA (ligase route): step 1/1. Functionally, succinyl-CoA synthetase functions in the citric acid cycle (TCA), coupling the hydrolysis of succinyl-CoA to the synthesis of either ATP or GTP and thus represents the only step of substrate-level phosphorylation in the TCA. The beta subunit provides nucleotide specificity of the enzyme and binds the substrate succinate, while the binding sites for coenzyme A and phosphate are found in the alpha subunit. This Azoarcus sp. (strain BH72) protein is Succinate--CoA ligase [ADP-forming] subunit beta.